The sequence spans 342 residues: Ribosomal RNA small subunit methyltransferase C (342 aa).

This sequence belongs to the methyltransferase superfamily. RsmC family. As to quaternary structure, monomer.

It localises to the cytoplasm. It carries out the reaction guanosine(1207) in 16S rRNA + S-adenosyl-L-methionine = N(2)-methylguanosine(1207) in 16S rRNA + S-adenosyl-L-homocysteine + H(+). Its function is as follows. Specifically methylates the guanine in position 1207 of 16S rRNA in the 30S particle. This is Ribosomal RNA small subunit methyltransferase C from Citrobacter koseri (strain ATCC BAA-895 / CDC 4225-83 / SGSC4696).